An 80-amino-acid chain; its full sequence is Conotoxin PnMKLT1-0121 (80 aa).

Positions 1–22 (MKLTCMMIVAVLFLTAWTFATA) are cleaved as a signal peptide. Positions 23-49 (DDPRNRLENFFSKTQHEMKNPEASKLN) are excised as a propeptide. Cystine bridges form between Cys-52-Cys-67, Cys-59-Cys-71, and Cys-66-Cys-75.

It belongs to the conotoxin O1 superfamily. As to expression, expressed by the venom duct.

Its subcellular location is the secreted. This chain is Conotoxin PnMKLT1-0121, found in Conus pennaceus (Feathered cone).